Reading from the N-terminus, the 264-residue chain is NADH-quinone oxidoreductase subunit I 2 (264 aa).

4Fe-4S ferredoxin-type domains follow at residues 57 to 86 and 98 to 127; these read GFLE…ISLE and TQFD…HTRE. [4Fe-4S] cluster is bound by residues Cys66, Cys69, Cys72, Cys76, Cys107, Cys110, Cys113, and Cys117. The interval 183–264 is disordered; that stretch reads APQFLPPEPP…AAPAANPESK (82 aa). A compositionally biased stretch (low complexity) spans 197–264; it reads AKPAAKAAPA…AAPAANPESK (68 aa).

It belongs to the complex I 23 kDa subunit family. NDH-1 is composed of 14 different subunits. Subunits NuoA, H, J, K, L, M, N constitute the membrane sector of the complex. Requires [4Fe-4S] cluster as cofactor.

It localises to the cell inner membrane. The catalysed reaction is a quinone + NADH + 5 H(+)(in) = a quinol + NAD(+) + 4 H(+)(out). Its function is as follows. NDH-1 shuttles electrons from NADH, via FMN and iron-sulfur (Fe-S) centers, to quinones in the respiratory chain. The immediate electron acceptor for the enzyme in this species is believed to be ubiquinone. Couples the redox reaction to proton translocation (for every two electrons transferred, four hydrogen ions are translocated across the cytoplasmic membrane), and thus conserves the redox energy in a proton gradient. The polypeptide is NADH-quinone oxidoreductase subunit I 2 (Anaeromyxobacter dehalogenans (strain 2CP-C)).